We begin with the raw amino-acid sequence, 36 residues long: Kappa-theraphotoxin-Pg1b (36 aa).

Intrachain disulfides connect C4-C19, C11-C24, and C18-C31.

Belongs to the neurotoxin 10 (Hwtx-1) family. 44 (Jztx-4) subfamily. In terms of tissue distribution, expressed by the venom gland.

Its subcellular location is the secreted. In terms of biological role, gating modifier of Kv2.1/KCNB1, Kv2.2/KCNB2 and Kv4.3/KCND3 channels. The sequence is that of Kappa-theraphotoxin-Pg1b from Chilobrachys guangxiensis (Chinese earth tiger tarantula).